The primary structure comprises 455 residues: Ribulose bisphosphate carboxylase large chain (455 aa).

Lys-5 is modified (N6,N6,N6-trimethyllysine). Asn-114 and Thr-164 together coordinate substrate. Lys-166 serves as the catalytic Proton acceptor. Residue Lys-168 coordinates substrate. Mg(2+) contacts are provided by Lys-192, Asp-194, and Glu-195. Residue Lys-192 is modified to N6-carboxylysine. His-285 functions as the Proton acceptor in the catalytic mechanism. Residues Arg-286, His-318, and Ser-370 each coordinate substrate.

Belongs to the RuBisCO large chain family. Type I subfamily. As to quaternary structure, heterohexadecamer of 8 large chains and 8 small chains; disulfide-linked. The disulfide link is formed within the large subunit homodimers. Mg(2+) is required as a cofactor. In terms of processing, the disulfide bond which can form in the large chain dimeric partners within the hexadecamer appears to be associated with oxidative stress and protein turnover.

It localises to the plastid. The protein localises to the chloroplast. It catalyses the reaction 2 (2R)-3-phosphoglycerate + 2 H(+) = D-ribulose 1,5-bisphosphate + CO2 + H2O. It carries out the reaction D-ribulose 1,5-bisphosphate + O2 = 2-phosphoglycolate + (2R)-3-phosphoglycerate + 2 H(+). Its function is as follows. RuBisCO catalyzes two reactions: the carboxylation of D-ribulose 1,5-bisphosphate, the primary event in carbon dioxide fixation, as well as the oxidative fragmentation of the pentose substrate in the photorespiration process. Both reactions occur simultaneously and in competition at the same active site. The protein is Ribulose bisphosphate carboxylase large chain of Lupinus nanus (Sky lupine).